The chain runs to 290 residues: Protein-glutamine deamidase Cif (290 aa).

The segment at Met-1–Arg-26 is disordered. Catalysis depends on residues Cys-117, His-173, and Gln-193.

This sequence belongs to the Cif family.

It localises to the secreted. Its subcellular location is the host nucleus. The catalysed reaction is L-glutaminyl-[protein] + H2O = L-glutamyl-[protein] + NH4(+). Protein-glutamine deamidase effector that inhibits the host cell cycle and other key cellular processes such as the actin network and programmed-cell death. Acts by mediating the side chain deamidation of 'Gln-40' of host NEDD8, converting it to glutamate, thereby abolishing the activity of cullin-RING-based E3 ubiquitin-protein ligase complexes (CRL complexes). Inactivation of CRL complexes prevents ubiquitination and subsequent degradation of the cyclin-dependent kinase inhibitors CDKN1A/p21 and CDKN1B/p27, leading to G1 and G2 cell cycle arrests in host cells. Also able to catalyze deamidation of 'Gln-40' of host ubiquitin in vitro; however, NEDD8 constitutes the preferred substrate in vivo. The polypeptide is Protein-glutamine deamidase Cif (Yersinia pseudotuberculosis serotype O:3 (strain YPIII)).